Here is a 301-residue protein sequence, read N- to C-terminus: Acetylglutamate kinase (301 aa).

Residues 68–69 (GG), arginine 90, and asparagine 195 each bind substrate.

This sequence belongs to the acetylglutamate kinase family. ArgB subfamily.

Its subcellular location is the cytoplasm. The enzyme catalyses N-acetyl-L-glutamate + ATP = N-acetyl-L-glutamyl 5-phosphate + ADP. It functions in the pathway amino-acid biosynthesis; L-arginine biosynthesis; N(2)-acetyl-L-ornithine from L-glutamate: step 2/4. In terms of biological role, catalyzes the ATP-dependent phosphorylation of N-acetyl-L-glutamate. This is Acetylglutamate kinase from Pseudomonas fluorescens (strain ATCC BAA-477 / NRRL B-23932 / Pf-5).